We begin with the raw amino-acid sequence, 461 residues long: Coronin-1A (461 aa).

S2 is subject to N-acetylserine. S2 carries the phosphoserine; by PKC modification. 7 WD repeats span residues 13–63 (HVFG…LVLP), 73–110 (NVPL…MVWE), 123–160 (PVVT…LVWD), 164–204 (GAAV…RVIE), 207–251 (KGTV…ALWD), 258–296 (PLSL…RYFE), and 302–349 (PFLH…EPIA). Residues 407–418 (NRGLDSARRRAT) show a composition bias toward basic and acidic residues. Residues 407-431 (NRGLDSARRRATPEPSSTLSSDTVS) are disordered. At S412 the chain carries Phosphoserine; by PKC. Phosphothreonine is present on T418. Residues 420-430 (EPSSTLSSDTV) are compositionally biased toward polar residues. S422 carries the phosphoserine modification. Residues 425–461 (LSSDTVSRLEEDVRNLNAIVQKLQERLDRLEETVQAK) adopt a coiled-coil conformation.

Belongs to the WD repeat coronin family. Binds actin. Phosphorylation at Ser-412 by PKC strongly down-regulates the association with actin. Post-translationally, polyubiquitinated by RNF128 with 'Lys-48'-linked chains, leading to proteasomal degradation.

Its subcellular location is the cytoplasm. It is found in the cytoskeleton. It localises to the cell cortex. The protein resides in the cytoplasmic vesicle. The protein localises to the phagosome membrane. Functionally, may be a crucial component of the cytoskeleton of highly motile cells, functioning both in the invagination of large pieces of plasma membrane, as well as in forming protrusions of the plasma membrane involved in cell locomotion. The protein is Coronin-1A (Coro1a) of Rattus norvegicus (Rat).